A 228-amino-acid polypeptide reads, in one-letter code: DNA mismatch repair protein MutH (228 aa).

The protein belongs to the MutH family.

The protein resides in the cytoplasm. Sequence-specific endonuclease that cleaves unmethylated GATC sequences. It is involved in DNA mismatch repair. The polypeptide is DNA mismatch repair protein MutH (Photorhabdus laumondii subsp. laumondii (strain DSM 15139 / CIP 105565 / TT01) (Photorhabdus luminescens subsp. laumondii)).